Here is a 546-residue protein sequence, read N- to C-terminus: Chaperonin GroEL (546 aa).

ATP is bound by residues 30–33 (TLGP), Lys51, 87–91 (DGTTT), Gly415, and Asp496. The tract at residues 526 to 546 (PQKDAPAGGGMPDMGGMGGMM) is disordered. Gly residues predominate over residues 532–546 (AGGGMPDMGGMGGMM).

It belongs to the chaperonin (HSP60) family. Forms a cylinder of 14 subunits composed of two heptameric rings stacked back-to-back. Interacts with the co-chaperonin GroES.

The protein localises to the cytoplasm. The enzyme catalyses ATP + H2O + a folded polypeptide = ADP + phosphate + an unfolded polypeptide.. Its function is as follows. Together with its co-chaperonin GroES, plays an essential role in assisting protein folding. The GroEL-GroES system forms a nano-cage that allows encapsulation of the non-native substrate proteins and provides a physical environment optimized to promote and accelerate protein folding. The sequence is that of Chaperonin GroEL from Ruegeria pomeroyi (strain ATCC 700808 / DSM 15171 / DSS-3) (Silicibacter pomeroyi).